A 175-amino-acid chain; its full sequence is ATP-dependent protease subunit HslV (175 aa).

The active site involves Thr-2. Positions 159, 162, and 165 each coordinate Na(+).

Belongs to the peptidase T1B family. HslV subfamily. As to quaternary structure, a double ring-shaped homohexamer of HslV is capped on each side by a ring-shaped HslU homohexamer. The assembly of the HslU/HslV complex is dependent on binding of ATP.

It localises to the cytoplasm. It carries out the reaction ATP-dependent cleavage of peptide bonds with broad specificity.. With respect to regulation, allosterically activated by HslU binding. In terms of biological role, protease subunit of a proteasome-like degradation complex believed to be a general protein degrading machinery. The protein is ATP-dependent protease subunit HslV of Ligilactobacillus salivarius (strain UCC118) (Lactobacillus salivarius).